The primary structure comprises 318 residues: Homoserine O-succinyltransferase (318 aa).

The active-site Acyl-thioester intermediate is the Cys142. Positions 163 and 192 each coordinate substrate. His235 serves as the catalytic Proton acceptor. The active site involves Glu237. Arg249 is a substrate binding site.

This sequence belongs to the MetA family.

Its subcellular location is the cytoplasm. It catalyses the reaction L-homoserine + succinyl-CoA = O-succinyl-L-homoserine + CoA. It participates in amino-acid biosynthesis; L-methionine biosynthesis via de novo pathway; O-succinyl-L-homoserine from L-homoserine: step 1/1. In terms of biological role, transfers a succinyl group from succinyl-CoA to L-homoserine, forming succinyl-L-homoserine. The chain is Homoserine O-succinyltransferase from Shewanella putrefaciens (strain CN-32 / ATCC BAA-453).